Consider the following 220-residue polypeptide: Uracil-DNA glycosylase (220 aa).

D61 functions as the Proton acceptor in the catalytic mechanism.

The protein belongs to the uracil-DNA glycosylase (UDG) superfamily. UNG family.

It localises to the cytoplasm. It catalyses the reaction Hydrolyzes single-stranded DNA or mismatched double-stranded DNA and polynucleotides, releasing free uracil.. In terms of biological role, excises uracil residues from the DNA which can arise as a result of misincorporation of dUMP residues by DNA polymerase or due to deamination of cytosine. This is Uracil-DNA glycosylase from Glaesserella parasuis serovar 5 (strain SH0165) (Haemophilus parasuis).